An 87-amino-acid polypeptide reads, in one-letter code: UPF0250 protein NT01EI_2946 (87 aa).

It belongs to the UPF0250 family.

In Edwardsiella ictaluri (strain 93-146), this protein is UPF0250 protein NT01EI_2946.